The primary structure comprises 230 residues: SPbeta prophage-derived putative HNH endonuclease YoqL (230 aa).

An HNH domain is found at Cys136–Asp188.

The protein belongs to the HNH nuclease family.

The sequence is that of SPbeta prophage-derived putative HNH endonuclease YoqL (yoqL) from Bacillus subtilis (strain 168).